The chain runs to 504 residues: Fibroblast growth factor receptor-like 1 (504 aa).

The N-terminal stretch at 1-24 is a signal peptide; sequence MTPSPLLLLLLPPLLLGAFPPAAA. The Extracellular segment spans residues 25–378; the sequence is ARGPPKMADK…SSSATSLPWP (354 aa). The region spanning 29 to 115 is the Ig-like C2-type 1 domain; sequence PKMADKVVPR…GSLSVNYTLV (87 aa). Cysteines 51 and 99 form a disulfide. N-linked (GlcNAc...) asparagine glycosylation occurs at N111. The disordered stretch occupies residues 123–155; that stretch reads GKESLGPDSSSGGQEDPASQQWARPRFTQPSKM. The segment covering 129-144 has biased composition (polar residues); sequence PDSSSGGQEDPASQQW. 2 consecutive Ig-like C2-type domains span residues 147-237 and 246-354; these read PRFT…YKVD and PVLT…AFLT. The cysteines at positions 172 and 221 are disulfide-linked. Residues N231, N255, and N293 are each glycosylated (N-linked (GlcNAc...) asparagine). A disulfide bond links C268 and C338. Residues 379–399 form a helical membrane-spanning segment; it reads VVIGIPAGAVFILGTLLLWLC. The Cytoplasmic segment spans residues 400-504; the sequence is QAQKKPCTPA…KVHQHIHYQC (105 aa). The span at 407–418 shows a compositional bias: pro residues; sequence TPAPAPPLPGHR. Residues 407–435 are disordered; that stretch reads TPAPAPPLPGHRPPGTARDRSGDKDLPSL. Over residues 423–432 the composition is skewed to basic and acidic residues; sequence ARDRSGDKDL.

In terms of assembly, interacts with FGF2 with a low affinity. Expressed preferentially in cartilaginous tissues and pancreas. Highly expressed in the liver, kidney, heart, brain and skeletal muscle. Weakly expressed in the lung, small intestine and spleen.

It localises to the membrane. In terms of biological role, has a negative effect on cell proliferation. This chain is Fibroblast growth factor receptor-like 1 (FGFRL1), found in Homo sapiens (Human).